A 602-amino-acid polypeptide reads, in one-letter code: NAD-reducing hydrogenase HoxS subunit alpha (602 aa).

219–228 (GRGGAGFSTG) contributes to the NAD(+) binding site. 332–379 (GAGAYICGDESALIESCEGKRGTPRVKPPFPVQQGYLGKPTSVNNVET) contributes to the FMN binding site. 4 residues coordinate [4Fe-4S] cluster: C499, C502, C505, and C545.

Belongs to the complex I 51 kDa subunit family. As to quaternary structure, tetramer of an alpha and a gamma subunits (flavin-containing dimer), and a delta and a nickel-containing beta subunit (hydrogenase dimer). FMN is required as a cofactor. It depends on [4Fe-4S] cluster as a cofactor.

Its subcellular location is the cytoplasm. The catalysed reaction is H2 + NAD(+) = NADH + H(+). Its function is as follows. Subunits alpha and gamma of HoxS constitute an NADH--oxidoreductase. The polypeptide is NAD-reducing hydrogenase HoxS subunit alpha (hoxF) (Cupriavidus necator (strain ATCC 17699 / DSM 428 / KCTC 22496 / NCIMB 10442 / H16 / Stanier 337) (Ralstonia eutropha)).